A 440-amino-acid polypeptide reads, in one-letter code: Ribosomal protein uS12 methylthiotransferase RimO (440 aa).

One can recognise an MTTase N-terminal domain in the interval 8 to 124 (TSVFLLSLGC…VLDALGARYH (117 aa)). Positions 17, 53, 87, 148, 152, and 155 each coordinate [4Fe-4S] cluster. Residues 134–363 (LTPPHSSYLK…MELQEEIARK (230 aa)) form the Radical SAM core domain. The 72-residue stretch at 366–437 (EAFVGSLMTV…AYELHGTVES (72 aa)) folds into the TRAM domain.

It belongs to the methylthiotransferase family. RimO subfamily. Requires [4Fe-4S] cluster as cofactor.

The protein localises to the cytoplasm. The catalysed reaction is L-aspartate(89)-[ribosomal protein uS12]-hydrogen + (sulfur carrier)-SH + AH2 + 2 S-adenosyl-L-methionine = 3-methylsulfanyl-L-aspartate(89)-[ribosomal protein uS12]-hydrogen + (sulfur carrier)-H + 5'-deoxyadenosine + L-methionine + A + S-adenosyl-L-homocysteine + 2 H(+). Catalyzes the methylthiolation of an aspartic acid residue of ribosomal protein uS12. This is Ribosomal protein uS12 methylthiotransferase RimO from Chlorobium luteolum (strain DSM 273 / BCRC 81028 / 2530) (Pelodictyon luteolum).